The following is an 800-amino-acid chain: Nuclear poly(A) polymerase 2 (800 aa).

ATP-binding positions include 103-105, 115-118, Asp171, Lys232, Tyr241, and 250-251; these read FGS, ADID, and GV. Residues Asp116, Asp118, and Asp171 each coordinate Mg(2+). Short sequence motifs (nuclear localization signal) lie at residues 487 to 494 and 533 to 540; these read RRRQLPSF and KRKNDDEI. The segment at 497–576 is disordered; the sequence is PNGYKRSRQS…SGITTSGTPQ (80 aa). Residues 527-538 are compositionally biased toward basic and acidic residues; the sequence is SVERYAKRKNDD. Over residues 564–575 the composition is skewed to polar residues; the sequence is PDSSGITTSGTP.

Belongs to the poly(A) polymerase family. As to quaternary structure, monomer. Forms a complex with cleavage and polyadenylation specificity factor (CPSF) subunits CPSF100, CPSF30, FIPS5 and PABN2. The cofactor is Mg(2+). Mn(2+) is required as a cofactor. In terms of tissue distribution, mostly expressed in flowers (highly in the style, receptacle and pedicel, but weakly in the vasculature of sepals) and hypocotyls, and, to a lower extent, in roots and stems. Barely detected in leaves (petioles and vascular system).

Its subcellular location is the nucleus. It localises to the cytoplasm. It carries out the reaction RNA(n) + ATP = RNA(n)-3'-adenine ribonucleotide + diphosphate. In terms of biological role, essential protein. Polymerase that creates the 3'-poly(A) tail of mRNA's. Also required for the endoribonucleolytic cleavage reaction at some polyadenylation sites. May acquire specificity through interaction with a cleavage and polyadenylation specificity factor (CPSF) at its C-terminus. Mediates the polyadenylation of RNAs that are associated with polynucleotide phosphorylase (e.g. PNP1). The sequence is that of Nuclear poly(A) polymerase 2 from Arabidopsis thaliana (Mouse-ear cress).